Reading from the N-terminus, the 404-residue chain is Cysteine desulfurase IscS (404 aa).

Residues 75–76 (AT), Asn-155, Gln-183, and 203–205 (SGH) contribute to the pyridoxal 5'-phosphate site. Residue Lys-206 is modified to N6-(pyridoxal phosphate)lysine. Thr-243 is a pyridoxal 5'-phosphate binding site. Cys-328 acts as the Cysteine persulfide intermediate in catalysis. Cys-328 is a binding site for [2Fe-2S] cluster.

Belongs to the class-V pyridoxal-phosphate-dependent aminotransferase family. NifS/IscS subfamily. As to quaternary structure, homodimer. Forms a heterotetramer with IscU, interacts with other sulfur acceptors. Requires pyridoxal 5'-phosphate as cofactor.

It is found in the cytoplasm. The catalysed reaction is (sulfur carrier)-H + L-cysteine = (sulfur carrier)-SH + L-alanine. Its pathway is cofactor biosynthesis; iron-sulfur cluster biosynthesis. Functionally, master enzyme that delivers sulfur to a number of partners involved in Fe-S cluster assembly, tRNA modification or cofactor biosynthesis. Catalyzes the removal of elemental sulfur and selenium atoms from cysteine and selenocysteine to produce alanine. Functions as a sulfur delivery protein for Fe-S cluster synthesis onto IscU, an Fe-S scaffold assembly protein, as well as other S acceptor proteins. Also functions as a selenium delivery protein in the pathway for the biosynthesis of selenophosphate. The sequence is that of Cysteine desulfurase IscS from Escherichia coli (strain K12 / DH10B).